Here is a 311-residue protein sequence, read N- to C-terminus: Interleukin-20 receptor subunit beta (311 aa).

An N-terminal signal peptide occupies residues 1 to 29; it reads MQTFTMVLEEIWTSLFMWFFYALIPCLLT. Topologically, residues 30–233 are extracellular; sequence DEVAILPAPQ…VEVQGEAIPL (204 aa). 2 consecutive Fibronectin type-III domains span residues 37-136 and 144-228; these read APQN…RNST and EITK…EVQG. N-linked (GlcNAc...) asparagine glycosylation is present at asparagine 40. Cysteine 89 and cysteine 97 are disulfide-bonded. N-linked (GlcNAc...) asparagine glycosylation occurs at asparagine 134. A disulfide bridge links cysteine 202 with cysteine 223. A helical transmembrane segment spans residues 234-254; it reads VLALFAFVGFMLILVVVPLFV. Residues 255 to 311 lie on the Cytoplasmic side of the membrane; it reads WKMGRLLQYSCCPVVVLPDTLKITNSPQKLISCRREEVDACATAVMSPEELLRAWIS.

Belongs to the type II cytokine receptor family. Heterodimer with IL20RA and heterodimer with IL22RA1. As to expression, widely expressed with highest levels in skin and testis. Highly expressed in psoriatic skin.

The protein localises to the membrane. Its function is as follows. The IL20RA/IL20RB dimer is a receptor for IL19, IL20 and IL24. The IL22RA1/IL20RB dimer is a receptor for IL20 and IL24. The sequence is that of Interleukin-20 receptor subunit beta (IL20RB) from Homo sapiens (Human).